The primary structure comprises 451 residues: Glyceraldehyde-3-phosphate dehydrogenase B, chloroplastic (451 aa).

Residues 1–25 (MATHAALASTRIPTNTRFPSKTSHS) form a disordered region. The N-terminal 84 residues, 1–84 (MATHAALAST…STAVKGVTVA (84 aa)), are a transit peptide targeting the chloroplast. A compositionally biased stretch (polar residues) spans 11-25 (RIPTNTRFPSKTSHS). Residues 95–96 (RI), Asp119, and Arg164 contribute to the NADP(+) site. Residues 238-240 (SCT), Thr269, Arg284, 297-298 (TG), and Arg320 each bind D-glyceraldehyde 3-phosphate. Cys239 (nucleophile) is an active-site residue. Asn403 is an NADP(+) binding site.

This sequence belongs to the glyceraldehyde-3-phosphate dehydrogenase family. As to quaternary structure, tetramer of either four A chains (GAPDH 2) or two A and two B chains (GAPDH 1).

Its subcellular location is the plastid. It is found in the chloroplast. It catalyses the reaction D-glyceraldehyde 3-phosphate + phosphate + NADP(+) = (2R)-3-phospho-glyceroyl phosphate + NADPH + H(+). Its pathway is carbohydrate biosynthesis; Calvin cycle. The sequence is that of Glyceraldehyde-3-phosphate dehydrogenase B, chloroplastic (GAPB) from Pisum sativum (Garden pea).